Reading from the N-terminus, the 351-residue chain is DNA polymerase IV (351 aa).

The 182-residue stretch at 4–185 (IIHVDMDCFF…LPLAKIPGVG (182 aa)) folds into the UmuC domain. Mg(2+) is bound by residues Asp8 and Asp103. Residue Glu104 is part of the active site.

The protein belongs to the DNA polymerase type-Y family. As to quaternary structure, monomer. Mg(2+) serves as cofactor.

It localises to the cytoplasm. The catalysed reaction is DNA(n) + a 2'-deoxyribonucleoside 5'-triphosphate = DNA(n+1) + diphosphate. Its function is as follows. Poorly processive, error-prone DNA polymerase involved in untargeted mutagenesis. Copies undamaged DNA at stalled replication forks, which arise in vivo from mismatched or misaligned primer ends. These misaligned primers can be extended by PolIV. Exhibits no 3'-5' exonuclease (proofreading) activity. May be involved in translesional synthesis, in conjunction with the beta clamp from PolIII. This chain is DNA polymerase IV, found in Salmonella arizonae (strain ATCC BAA-731 / CDC346-86 / RSK2980).